Here is a 269-residue protein sequence, read N- to C-terminus: Protein tio (269 aa).

Positions 1-12 (MANEPQEHEEGK) are enriched in basic and acidic residues. Residues 1–127 (MANEPQEHEE…NETKCPDEQN (127 aa)) are disordered. Residues 1 to 246 (MANEPQEHEE…VEKKLTCVIC (246 aa)) lie on the Cytoplasmic side of the membrane. Over residues 27–41 (PNIPQDPTPGTPPGP) the composition is skewed to pro residues. Residues 61–74 (SEGPPDGSGNSSPP) are compositionally biased toward low complexity. Composition is skewed to polar residues over residues 91-101 (SESGGNNSAPN) and 114-127 (AGNG…DEQN). Tyr136 carries the phosphotyrosine; by host LCK modification. Residues 158-167 (EEERSPFNKY) are CSKH/LBD2. The interval 186–195 (IPPPQLPPRP) is SH3B/LBD1. A helical transmembrane segment spans residues 247–267 (LLIGILVLLILLFMLGFLFLL). At 268 to 269 (MK) the chain is on the extracellular side.

In terms of assembly, homodimer. Binds SH3 domain of host LYN, HCK, LCK, SRC, FYN or YES. When tyrosine-phosphorylated, binds to the SH2 domain of host LCK, SRC, or FYN. Post-translationally, phosphorylated by host LCK, SRC and less efficiently by FYN.

The protein localises to the host cell membrane. Its function is as follows. Transforms host T-cells, inducing T-cell lymphomia in the host. Activates at least SRC and LCK tyrosines kinases, thereby activating signaling pathway transforming host T-cells. Human T-cells transformed ex vivo display a IL2 indenpendent growth phenotype. This is Protein tio from Ateles (AtHV-3).